Consider the following 117-residue polypeptide: MAISLTEEDFVVKVFDYKNDKEWSFRGDRPAIIDFYANWCGPCKMLSPIFEKLSKKYENSIDFYKVDTDKEQDISSAIGVQSLPTILFIPVDGKPKVSVGFLQEDAFENIIKDFFGF.

One can recognise a Thioredoxin domain in the interval 2–116 (AISLTEEDFV…FENIIKDFFG (115 aa)). Residues Cys40 and Cys43 are joined by a disulfide bond.

The protein belongs to the thioredoxin family.

Functionally, participates in various redox reactions through the reversible oxidation of its active center dithiol to a disulfide and catalyzes dithiol-disulfide exchange reactions. The chain is Thioredoxin (trxA) from Borreliella burgdorferi (strain ATCC 35210 / DSM 4680 / CIP 102532 / B31) (Borrelia burgdorferi).